The primary structure comprises 655 residues: MLITHLIDSLSDRAVITPLTPTSVIIYDKNELKVYVGFTNNRNSLEYTKEVVLLLSTEIPKKAEIREIIVSKNGDYVILEGPRSLFVVRIGAEILVAKPDRLPSECFCECYPLHDSLLLQNISLSVVKVRLLPEKCDEKTFVTAVLFSDNCIRFYNLQKKFDSLLLAVDFRNHLHQVHDENVANNTFGLQKALVSFDLIPPKPNTSHFSIISIDSDCDFYTSFVHFSCFKEGYAPRIHRIEPVDGLPCDPLDLRYIQTTNPRICSVFVLVSGGGVLSHLVVFPNEFGEFRFLVKDQLRLPSSNGDPRIVQNQIRSLKVSRYEIATSSSLFSVNIFPWFEALTSISPTSTLEKETRVSELVDAVIPSDELSNTTKWTGARALRAVSVQLTQSLATEEEELLPESENIMHLVILENKDGQPAHLFNISTFDNIWSTENKTSFGRDSVSQPPMKSTGSLEQQLAALKPLAACVISEKVSCEEAIDAAMKFFDAVDERLKKHCEISKLFVERCLAVSSSAQALDEKQQSVDQRLIEETNTVEELKIRMHETKERMEGARKGINVLFHRVDENVPLSDNEIRIFERLKEHQKMLSDMTKLVPKMTLDSNEIHRMANIVLKKRGTGEEQNRFAAVEKNATEIESLEARENKLNTGISELSI.

A helical membrane pass occupies residues 263 to 283; sequence ICSVFVLVSGGGVLSHLVVFP.

It localises to the membrane. The sequence is that of Protein npp-24 from Caenorhabditis elegans.